The following is a 608-amino-acid chain: Protein FAM151A (608 aa).

Residues 14–34 traverse the membrane as a helical segment; that stretch reads WILAGSVTVTLVLAISLILGL. A compositionally biased stretch (polar residues) spans 586-596; that stretch reads VSSNRPSSRIG. The disordered stretch occupies residues 586–608; it reads VSSNRPSSRIGPSSVEGFPGESR.

Belongs to the menorin family.

It localises to the membrane. The chain is Protein FAM151A (Fam151a) from Mus musculus (Mouse).